The following is a 500-amino-acid chain: Recombining binding protein suppressor of hairless (500 aa).

The disordered stretch occupies residues 1–30 (MDHTEGSPAEEPPAHAPSPGKFGERPPPKR). DNA-binding regions lie at residues 57–67 (QKSYGNEKRFF) and 165–170 (SKPSKK). Position 175 is an N6-acetyllysine (K175). The interval 192-197 (RLRSQT) is DNA-binding. The IPT/TIG domain occupies 355–445 (PVVESLQLNG…YSTSLTFTYT (91 aa)). Polar residues predominate over residues 465–481 (SSQVPPNESNTNSEGSY). Residues 465 to 500 (SSQVPPNESNTNSEGSYTNASTNSTSVTSSTATVVS) form a disordered region. A compositionally biased stretch (low complexity) spans 482-500 (TNASTNSTSVTSSTATVVS).

The protein belongs to the Su(H) family. Interacts with activated NOTCH1, NOTCH2 or NOTCH3. Interacts with MINT/SHARP. This interaction may mediate the recruitment of large corepressor complexes containing proteins such as HDAC1, HDAC2, NCOR2, SAP30, FHL1/KYOT2 and CIR1. Interacts with EP300, MAML1 and PTF1A. Interacts with RITA1/C12orf52, leading to nuclear export, prevent the interaction between RBPJ and NICD product and subsequent down-regulation of the Notch signaling pathway. Interacts with SNW1. Interacts with CHCHD2 and CXXC5. Interacts with BEND6 (via BEN domain). Interacts with NKAPL. Interacts with ZMIZ1. Interacts with RBM15. Interacts with L3MBTL3 and KDM1A; the interaction with KDM1A is weaker in the absence of L3MBTL3 and the interaction with L3MBTL3 is impaired by Notch-derived peptide containing the intracellular domain (NICD). In terms of assembly, (Microbial infection) Interacts with EBV EBNA2. Interacts with EBV EBNA3. Interacts with EBV EBNA4. Interacts with EBV EBNA6 (via N-terminus).

It localises to the nucleus. The protein resides in the cytoplasm. In terms of biological role, transcriptional regulator that plays a central role in Notch signaling, a signaling pathway involved in cell-cell communication that regulates a broad spectrum of cell-fate determinations. Acts as a transcriptional repressor when it is not associated with Notch proteins. When associated with some NICD product of Notch proteins (Notch intracellular domain), it acts as a transcriptional activator that activates transcription of Notch target genes. Probably represses or activates transcription via the recruitment of chromatin remodeling complexes containing histone deacetylase or histone acetylase proteins, respectively. Specifically binds to the immunoglobulin kappa-type J segment recombination signal sequence. Binds specifically to methylated DNA. Binds to the oxygen responsive element of COX4I2 and activates its transcription under hypoxia conditions (4% oxygen). Negatively regulates the phagocyte oxidative burst in response to bacterial infection by repressing transcription of NADPH oxidase subunits. The protein is Recombining binding protein suppressor of hairless of Homo sapiens (Human).